A 125-amino-acid chain; its full sequence is Small ribosomal subunit protein eS26 (125 aa).

It belongs to the eukaryotic ribosomal protein eS26 family.

This Sterkiella nova (Ciliate) protein is Small ribosomal subunit protein eS26 (RPS26).